The chain runs to 211 residues: MPDDFKIPRATLKRLPLYYRLVSILKGKGIDRVNSKTISEALQIDSATIRRDFSYFGELGKKGYGYNIDSMLEFFKSELSESDQIKIAIIGIGNLGRALLTYNFSIHDEMTITEAFDIRPDIIGENIGDVVVKHSDDIKTTLESEDIDVVILTTPDNVAQQVADELVKAGVKGILNFTPRRIKTPQDVQVHHIDFGIELQSLLFFMKNYSK.

The segment at residues 17-56 is a DNA-binding region (H-T-H motif); sequence LYYRLVSILKGKGIDRVNSKTISEALQIDSATIRRDFSYF. An NAD(+)-binding site is contributed by 91 to 96; that stretch reads GIGNLG.

It belongs to the transcriptional regulatory Rex family. In terms of assembly, homodimer.

Its subcellular location is the cytoplasm. Functionally, modulates transcription in response to changes in cellular NADH/NAD(+) redox state. This is Redox-sensing transcriptional repressor Rex from Staphylococcus epidermidis (strain ATCC 12228 / FDA PCI 1200).